Consider the following 491-residue polypeptide: Ketol-acid reductoisomerase (NADP(+)) (491 aa).

One can recognise a KARI N-terminal Rossmann domain in the interval 15–208; sequence AQLGKCRFMG…GGHRAGVLES (194 aa). NADP(+) is bound by residues 45–48, Arg-68, Arg-76, Ser-78, and 108–110; these read CGAQ and DKQ. His-132 is an active-site residue. NADP(+) is bound at residue Gly-158. KARI C-terminal knotted domains are found at residues 209 to 344 and 345 to 484; these read SFVA…TAPQ and YEGK…MTDM. Positions 217, 221, 389, and 393 each coordinate Mg(2+). Residue Ser-414 participates in substrate binding.

Belongs to the ketol-acid reductoisomerase family. The cofactor is Mg(2+).

The catalysed reaction is (2R)-2,3-dihydroxy-3-methylbutanoate + NADP(+) = (2S)-2-acetolactate + NADPH + H(+). The enzyme catalyses (2R,3R)-2,3-dihydroxy-3-methylpentanoate + NADP(+) = (S)-2-ethyl-2-hydroxy-3-oxobutanoate + NADPH + H(+). It participates in amino-acid biosynthesis; L-isoleucine biosynthesis; L-isoleucine from 2-oxobutanoate: step 2/4. The protein operates within amino-acid biosynthesis; L-valine biosynthesis; L-valine from pyruvate: step 2/4. Its function is as follows. Involved in the biosynthesis of branched-chain amino acids (BCAA). Catalyzes an alkyl-migration followed by a ketol-acid reduction of (S)-2-acetolactate (S2AL) to yield (R)-2,3-dihydroxy-isovalerate. In the isomerase reaction, S2AL is rearranged via a Mg-dependent methyl migration to produce 3-hydroxy-3-methyl-2-ketobutyrate (HMKB). In the reductase reaction, this 2-ketoacid undergoes a metal-dependent reduction by NADPH to yield (R)-2,3-dihydroxy-isovalerate. The polypeptide is Ketol-acid reductoisomerase (NADP(+)) (Salmonella arizonae (strain ATCC BAA-731 / CDC346-86 / RSK2980)).